Consider the following 57-residue polypeptide: Light-harvesting protein B-808/866 alpha chain (57 aa).

Methionine 1 is modified (N-formylmethionine). Topologically, residues 1 to 10 (MQPRSPVRTN) are cytoplasmic. A helical transmembrane segment spans residues 11–30 (IVIFTILGFVVALLIHFIVL). An a bacteriochlorophyll-binding site is contributed by histidine 26. Over 31–57 (SSPEYNWLSNAEGGALLLSAARALFGI) the chain is Periplasmic.

This sequence belongs to the antenna complex alpha subunit family. In terms of assembly, the core complex is formed by different alpha and beta chains, binding bacteriochlorophyll molecules, and arranged most probably in tetrameric structures disposed around the reaction center. The non-pigmented gamma chains may constitute additional components.

The protein resides in the cell membrane. Its function is as follows. Antenna complexes are light-harvesting systems, which transfer the excitation energy to the reaction centers. This chain is Light-harvesting protein B-808/866 alpha chain (puf2A), found in Chloroflexus aurantiacus (strain ATCC 29366 / DSM 635 / J-10-fl).